We begin with the raw amino-acid sequence, 260 residues long: Isoprenyl transferase (260 aa).

Asp-38 is an active-site residue. A Mg(2+)-binding site is contributed by Asp-38. Substrate-binding positions include 39–42 (GNGR), Trp-43, Arg-51, His-55, and 83–85 (STE). The active-site Proton acceptor is Asn-86. Substrate-binding positions include Trp-87, Arg-89, Arg-206, and 212–214 (RLS). A Mg(2+)-binding site is contributed by Glu-225.

This sequence belongs to the UPP synthase family. Homodimer. It depends on Mg(2+) as a cofactor.

In terms of biological role, catalyzes the condensation of isopentenyl diphosphate (IPP) with allylic pyrophosphates generating different type of terpenoids. This chain is Isoprenyl transferase, found in Heliobacterium mobile (Heliobacillus mobilis).